The following is a 70-amino-acid chain: uncharacterized protein (70 aa).

Residues 21–43 (YECPICGEIYIKRKSMITHLRKH) form a C2H2-type zinc finger.

This is an uncharacterized protein from Saccharolobus islandicus (Sulfolobus islandicus).